The primary structure comprises 94 residues: uncharacterized protein (94 aa).

It belongs to the phD/YefM antitoxin family.

This is an uncharacterized protein from Synechocystis sp. (strain ATCC 27184 / PCC 6803 / Kazusa).